A 270-amino-acid chain; its full sequence is Large ribosomal subunit protein uL2c (270 aa).

The segment at 221 to 245 (NPIDHPHGGGEGRAPIGRNQPKTPW) is disordered.

The protein belongs to the universal ribosomal protein uL2 family. Part of the 50S ribosomal subunit.

Its subcellular location is the plastid. The polypeptide is Large ribosomal subunit protein uL2c (rpl2) (Cuscuta gronovii (Common dodder)).